A 289-amino-acid chain; its full sequence is 4-hydroxy-tetrahydrodipicolinate synthase (289 aa).

Position 43 (Thr-43) interacts with pyruvate. Catalysis depends on Tyr-131, which acts as the Proton donor/acceptor. The active-site Schiff-base intermediate with substrate is the Lys-160. Val-200 is a pyruvate binding site.

This sequence belongs to the DapA family. In terms of assembly, homotetramer; dimer of dimers.

Its subcellular location is the cytoplasm. It catalyses the reaction L-aspartate 4-semialdehyde + pyruvate = (2S,4S)-4-hydroxy-2,3,4,5-tetrahydrodipicolinate + H2O + H(+). The protein operates within amino-acid biosynthesis; L-lysine biosynthesis via DAP pathway; (S)-tetrahydrodipicolinate from L-aspartate: step 3/4. In terms of biological role, catalyzes the condensation of (S)-aspartate-beta-semialdehyde [(S)-ASA] and pyruvate to 4-hydroxy-tetrahydrodipicolinate (HTPA). This Methanococcus maripaludis (strain C7 / ATCC BAA-1331) protein is 4-hydroxy-tetrahydrodipicolinate synthase.